A 216-amino-acid chain; its full sequence is Transmembrane emp24 domain-containing protein eca (216 aa).

Positions 1–20 (MRDQFICLALLLCALHSACG) are cleaved as a signal peptide. Over 21–182 (LYFHISETER…FRHTSESTNS (162 aa)) the chain is Lumenal. Positions 30–126 (RKCFIEEVPD…QLRVHLDIQV (97 aa)) constitute a GOLD domain. Residues 134-164 (ANVAQKEKLTELQLRIRQLLDQVEQITKEQN) adopt a coiled-coil conformation. Residues 183–203 (RVLWWSLAQTLVLVCMGFWQM) traverse the membrane as a helical segment. Over 204–216 (RHLKSFFEAKKLV) the chain is Cytoplasmic. The short motif at 213–216 (KKLV) is the Prevents secretion from ER element.

This sequence belongs to the EMP24/GP25L family.

It localises to the endoplasmic reticulum membrane. Its function is as follows. Eca and bai are essential, though not redundant, for dorsoventral patterning of the embryo. Specifically required during early embryogenesis for the activity of maternal tkv, while the zygotic tkv is not affected. Involved in Golgi organization. In Drosophila pseudoobscura pseudoobscura (Fruit fly), this protein is Transmembrane emp24 domain-containing protein eca.